Consider the following 467-residue polypeptide: UDP-N-acetylmuramate--L-alanine ligase (467 aa).

Residue 114-120 (GTHGKTT) participates in ATP binding.

The protein belongs to the MurCDEF family.

The protein localises to the cytoplasm. The enzyme catalyses UDP-N-acetyl-alpha-D-muramate + L-alanine + ATP = UDP-N-acetyl-alpha-D-muramoyl-L-alanine + ADP + phosphate + H(+). The protein operates within cell wall biogenesis; peptidoglycan biosynthesis. Cell wall formation. The sequence is that of UDP-N-acetylmuramate--L-alanine ligase from Azorhizobium caulinodans (strain ATCC 43989 / DSM 5975 / JCM 20966 / LMG 6465 / NBRC 14845 / NCIMB 13405 / ORS 571).